The sequence spans 257 residues: MAPCKPRTFTAGEDPLTKFDGAISVATMPRPADRQFLFHGIMRPSRGIYAKLVATGKKPPTHFHPSQWEFFRVLRGNLTVDINGVPVHRTVDDGEMAVPPYTHHVIYGTPGTEMNEVEFLVSATDEEEGATAMDQEFFENWYGYQEDIFQRGEKIDLIQVLAMFDAGGTYLSPPWWVPFRAWVGLILGIVIGRWIGGLLGYAPFYPEWTTNWDAACDRMEQSWFQRRYADRGAQQRAREKFQVQKGQGTVAKGEKSE.

The protein belongs to the oxidoreductase OpS7 family.

Its pathway is secondary metabolite biosynthesis; terpenoid biosynthesis. Its function is as follows. Part of the gene cluster that mediates the biosynthesis of yanuthone D, a fungal isoprenoid epoxycyclohexenone that acts as an antibiotic against fungi and bacteria. The first step of the pathway is the synthesis of 6-methylsalicylic acid (6-MSA) by the polyketide synthase yanA. 6-MSA is then converted to m-cresol by the decarboxylase yanB. The cytochrome P450 monooxygenase yanC then catalyzes the oxidation of m-cresol to toluquinol. Epoxidation of toluquinol is then performed by the short chain dehydrogenase yanD, with the help of yanE, and a further prenylation by yanG leads to 7-deacetoxyyanuthone A. The next step is the hydroxylation of C-22 of 7-deacetoxyyanuthone A by the cytochrome P450 monooxygenase yanH to yield 22-deacetylyanuthone A. O-Mevalon transferase yanI then attaches mevalon to the hydroxyl group of 22-deacetylyanuthone A to produce yanuthone E. Finally, the FAD-dependent monooxygenase yanF oxidizes the hydroxyl group at C15 of yanuthone E to form yanuthone D. Furthermore, several branching points in the pathway lead to the production of yanuthones F and G from 7-deacetoxyyanuthone A; yanuthones H and I from 22-deacetylyanuthone A; and yanuthone J from yanuthone E. YanE is also involved in the synthesis of yanuthone X1 which does not have 6-methylsalicylic acid (6-MSA) as precursor. The chain is Probable oxidoreductase yanE from Aspergillus niger (strain ATCC 1015 / CBS 113.46 / FGSC A1144 / LSHB Ac4 / NCTC 3858a / NRRL 328 / USDA 3528.7).